The sequence spans 223 residues: MADLVPVLTIDGPSGVGKGTVSKIVAARLGWHYLDSGALYRAVAVAVDWAAVDVSDTTALVKCAFDTCVNFAECADGEMRVLVNAIDATDVLRMETTGVLASTIAAISEVRAALKERQQMFRRTPGLVADGRDMGTVIFPDAQYKVFLTAKAEERAQRRYKQLMKKGVSVMLGALLEEIRARDARDVCRSVAPLKPADDALLIDSTCMEVDEVVAQVLALVTD.

12-20 contributes to the ATP binding site; sequence GPSGVGKGT.

The protein belongs to the cytidylate kinase family. Type 1 subfamily.

The protein resides in the cytoplasm. It carries out the reaction CMP + ATP = CDP + ADP. The catalysed reaction is dCMP + ATP = dCDP + ADP. The protein is Cytidylate kinase of Xylella fastidiosa (strain M12).